We begin with the raw amino-acid sequence, 104 residues long: Protein SMALL AUXIN UP-REGULATED RNA 9 (104 aa).

The protein belongs to the ARG7 family. Interacts with and inhibits PP2C-D subfamily of type 2C phosphatases such as PP2C67/PP2C-D1. Expressed in etiolated hypocotyls, petioles, leaves and flowers.

It localises to the cell membrane. Provide a mechanistic link between auxin and plasma membrane H(+)-ATPases (PM H(+)-ATPases, e.g. AHA1 and AHA2), and triggers PM H(+)-ATPases activity by promoting phosphorylation of their C-terminal autoinhibitory domain as a result of PP2C-D subfamily of type 2C phosphatases inhibition, thus leading to the acidification of the apoplast and the facilitation of solutes and water uptake to drive cell expansion. Triggers plant growth probably by promoting cell elongation. Regulates branch angles and bending. Probably involved in light intensity mediated root development. The protein is Protein SMALL AUXIN UP-REGULATED RNA 9 of Arabidopsis thaliana (Mouse-ear cress).